We begin with the raw amino-acid sequence, 343 residues long: Peptide methionine sulfoxide reductase msrA/msrB (343 aa).

A peptide methionine sulfoxide reductase A region spans residues 21–174 (KVIYLAGGCF…PNGYCHIDLK (154 aa)). Cys-29 functions as the Cysteine sulfenic acid (-SOH) intermediate in the catalytic mechanism. In terms of domain architecture, MsrB spans 191 to 314 (DEVLKKKLTQ…NSASLRFIPL (124 aa)). The active-site Nucleophile is the Cys-303.

This sequence in the N-terminal section; belongs to the MsrA Met sulfoxide reductase family. The protein in the C-terminal section; belongs to the MsrB Met sulfoxide reductase family.

It carries out the reaction L-methionyl-[protein] + [thioredoxin]-disulfide + H2O = L-methionyl-(S)-S-oxide-[protein] + [thioredoxin]-dithiol. The catalysed reaction is [thioredoxin]-disulfide + L-methionine + H2O = L-methionine (S)-S-oxide + [thioredoxin]-dithiol. It catalyses the reaction L-methionyl-[protein] + [thioredoxin]-disulfide + H2O = L-methionyl-(R)-S-oxide-[protein] + [thioredoxin]-dithiol. In terms of biological role, has an important function as a repair enzyme for proteins that have been inactivated by oxidation. Catalyzes the reversible oxidation-reduction of methionine sulfoxide in proteins to methionine. The sequence is that of Peptide methionine sulfoxide reductase msrA/msrB from Enterococcus faecalis (Streptococcus faecalis).